The following is a 234-amino-acid chain: Ribose-5-phosphate isomerase A (234 aa).

Residues 39–42, 92–95, and 105–108 contribute to the substrate site; these read TGST, DGAD, and KGGG. Glu-114 serves as the catalytic Proton acceptor. Lys-132 serves as a coordination point for substrate.

This sequence belongs to the ribose 5-phosphate isomerase family. In terms of assembly, homodimer.

It carries out the reaction aldehydo-D-ribose 5-phosphate = D-ribulose 5-phosphate. It participates in carbohydrate degradation; pentose phosphate pathway; D-ribose 5-phosphate from D-ribulose 5-phosphate (non-oxidative stage): step 1/1. Catalyzes the reversible conversion of ribose-5-phosphate to ribulose 5-phosphate. This Albidiferax ferrireducens (strain ATCC BAA-621 / DSM 15236 / T118) (Rhodoferax ferrireducens) protein is Ribose-5-phosphate isomerase A.